The chain runs to 100 residues: uncharacterized protein (100 aa).

The chain crosses the membrane as a helical span at residues 62–82; sequence IPIVIIVSIFILLIIGSISLY.

It is found in the membrane. This is an uncharacterized protein from Dictyostelium discoideum (Social amoeba).